We begin with the raw amino-acid sequence, 236 residues long: Phosphoribosylaminoimidazole-succinocarboxamide synthase (236 aa).

The protein belongs to the SAICAR synthetase family.

It carries out the reaction 5-amino-1-(5-phospho-D-ribosyl)imidazole-4-carboxylate + L-aspartate + ATP = (2S)-2-[5-amino-1-(5-phospho-beta-D-ribosyl)imidazole-4-carboxamido]succinate + ADP + phosphate + 2 H(+). Its pathway is purine metabolism; IMP biosynthesis via de novo pathway; 5-amino-1-(5-phospho-D-ribosyl)imidazole-4-carboxamide from 5-amino-1-(5-phospho-D-ribosyl)imidazole-4-carboxylate: step 1/2. The chain is Phosphoribosylaminoimidazole-succinocarboxamide synthase from Chlorobium limicola (strain DSM 245 / NBRC 103803 / 6330).